The following is a 147-amino-acid chain: Transthyretin (147 aa).

Residues 1 to 20 (MASLRLFLLCLAGLVFVSEA) form the signal peptide. At cysteine 30 the chain carries Sulfocysteine. Lysine 35 is a binding site for L-thyroxine. The residue at position 62 (glutamate 62) is a 4-carboxyglutamate. Residue serine 72 is modified to Phosphoserine. Residue glutamate 74 coordinates L-thyroxine. Asparagine 118 carries an N-linked (GlcNAc...) asparagine glycan. Serine 137 provides a ligand contact to L-thyroxine.

It belongs to the transthyretin family. Homotetramer. Dimer of dimers. In the homotetramer, subunits assemble around a central channel that can accommodate two ligand molecules. Interacts with RBP4. Sulfonation of the reactive cysteine Cys-30 enhances the stability of the native conformation of TTR, avoiding misassembly of the protein leading to amyloid formation. As to expression, detected in plasma (at protein level). Detected in liver.

It localises to the secreted. Its function is as follows. Thyroid hormone-binding protein. Probably transports thyroxine from the bloodstream to the brain. This chain is Transthyretin (Ttr), found in Mus musculus (Mouse).